The primary structure comprises 173 residues: MMTLIMLISLITSFIFMQMKHPLAMGLMLLIQTFLTSLLTGMFVKTFWFSYVLFLIFMGGMLVLFIYVTSLSSNEMFSLSMKLFFLSLSMILMFIVFSFFFDKSIISMFINNNEMNNLFSTNSLMMEDLISLNKMYNFPTNLITLLLINYLFLTLLVTVKITKKNYGPLRPMN.

4 consecutive transmembrane segments (helical) span residues 24–44 (AMGL…GMFV), 47–67 (FWFS…LFIY), 81–101 (MKLF…SFFF), and 142–162 (LITL…VKIT).

This sequence belongs to the complex I subunit 6 family.

The protein resides in the mitochondrion membrane. It carries out the reaction a ubiquinone + NADH + 5 H(+)(in) = a ubiquinol + NAD(+) + 4 H(+)(out). Functionally, core subunit of the mitochondrial membrane respiratory chain NADH dehydrogenase (Complex I) that is believed to belong to the minimal assembly required for catalysis. Complex I functions in the transfer of electrons from NADH to the respiratory chain. The immediate electron acceptor for the enzyme is believed to be ubiquinone. In Aedes aegypti (Yellowfever mosquito), this protein is NADH-ubiquinone oxidoreductase chain 6.